We begin with the raw amino-acid sequence, 133 residues long: MARVKRGVTAHAKHKKILKQAEGFYGRRKNTIRAAKAAVDRSKQYAYRDRKNRKRTFRALWIQRINAAVRMEGLTYGRFIDGLSKAGIEIDRKVLSDIAIHEPTVFSALVASAKKALEYLKDTTPNAFEGAVK.

Belongs to the bacterial ribosomal protein bL20 family.

Functionally, binds directly to 23S ribosomal RNA and is necessary for the in vitro assembly process of the 50S ribosomal subunit. It is not involved in the protein synthesizing functions of that subunit. The chain is Large ribosomal subunit protein bL20 from Bartonella bacilliformis (strain ATCC 35685 / KC583 / Herrer 020/F12,63).